A 209-amino-acid polypeptide reads, in one-letter code: uncharacterized protein (209 aa).

The stretch at 39–75 forms a coiled coil; that stretch reads VSFENFMERYDTMEKNIQDLQNKYEEMANNLVAVMAD. Positions 103–131 are disordered; it reads TMKDATSLPPPNPNNEQSVFTNGSPTSGK. A compositionally biased stretch (polar residues) spans 116-129; the sequence is NNEQSVFTNGSPTS.

It belongs to the asfivirus K205R family.

The protein localises to the host cytoplasm. Induces host endoplasmic reticulum stress and consequently activates autophagy and NF-kappa-B signaling pathway. In turn, may induce autophagy-mediated STING1 degradation and innate immune evasion. This is an uncharacterized protein from Ornithodoros (relapsing fever ticks).